The following is a 261-amino-acid chain: HTH-type transcriptional repressor CsqR (261 aa).

Positions 8–63 constitute an HTH deoR-type domain; that stretch reads GNPRHDQLLMLIAERGYMNIDELANLLDVSTQTVRRDIRKLSEQGLITRHHGGAGR. The segment at residues 25-44 is a DNA-binding region (H-T-H motif); it reads MNIDELANLLDVSTQTVRRD.

Monomer in the absence of DNA. Exhibits a high level of cooperativity once it is bound to its target DNA.

With respect to regulation, inactivated in the presence of the effectors sulfoquinovose and sulfoquinovosyl glycerol, leading to the de-repression of the target genes. Involved in the regulation of the sulfoquinovose operon. Represses the expression of the yihUTS operon and of the yihV and csqR genes. Binds DNA inside the spacer between the bidirectional transcription units comprising the yihUTS operon and the yihV gene, and upstream the csqR gene itself. The polypeptide is HTH-type transcriptional repressor CsqR (Escherichia coli (strain K12)).